A 950-amino-acid polypeptide reads, in one-letter code: MSHNHMMNNQQQHAAMINPGAVASVSGAQVQQRSMMSQQRGGSHAINSSKSPYQLQTSSISQFSHLQQQQQQQQQQQLVNNYHKQKQMSPDITSHQFSSSTGGGMPTQNGNYQSMSGSSIHTSMGLDNGQLSLQHQHHQYSSQPAQALQTSVQQHHYQSQQMTQQQQQAAQQQPQQQYQSFQQQHHLIQQQQQQQQIHTQQQQQLPQQAMHQQQQHLQLHQHLQQRSLNQQQQQQQRYQKQQQQPQPKQILQHSPTSGKSLSSAPHGTSVQPSTLLNHHQHNMAAPQVTPVTNGESAGEDTSPKDSPQAPKTSGRDSVHVSDNEESASNASEMQQSLANTKEKTPMCLINELARFNKMSHQYTLVDEQGPAHKKTFYVKLKLGDEEYSASGESIKKAQHAAAAIALVETKCPHPPPKPARLGCCDLEKSADGNITPTVELNALAMKRGEPALYKSIEPQQPPYYHQPNMDFRGLYNQRYHQYMRASRDPRYRGNGVLWPLRYHYPRMNRAFYVSLRVGHREFIGDGPTRQAARHNAAQKALRILKNLPVQSGEKKSEEQADEAAEDACEEDVDDSLKSEISLVHEIALRRNMVVQFEVIRETGPPHMKNFLTRCTVADMVTEGEGNSKKTSKKKAAELMLEELRKLPPLATPAFPRPKSKIQMNKKKNRNLIKSELQQQKADPNYGVGINPISRLIQIMQAQKKKEPVYTLVTERGLPRRREFIVQVEVEDKTCPGSGPNKKLAKRAAAEAMLQLLGYTKPSPQPTKSSFKNPSTGEAGQTNGDKKVTFVGGDSPGDGDDKVSSGSNQQRVPGLLHLPSKSSASSSGNQHTASKESLVNLASILKPNLRPEIQLRELCKAMDCQLEIDDFTKKRTSGTEHITRITIGSENPQSFHGSNTSLESSRDMAALDALKVLVARAKDIHPGGDGPQVKKDVLARSGSGMKKDFSK.

3 disordered regions span residues 25 to 168, 202 to 274, and 288 to 342; these read VSGA…QQQQ, QQQL…QPST, and VTPV…NTKE. Low complexity predominate over residues 31 to 43; it reads QQRSMMSQQRGGS. Polar residues predominate over residues 45–66; the sequence is AINSSKSPYQLQTSSISQFSHL. The segment covering 67–77 has biased composition (low complexity); sequence QQQQQQQQQQQ. Polar residues predominate over residues 78 to 122; sequence LVNNYHKQKQMSPDITSHQFSSSTGGGMPTQNGNYQSMSGSSIHT. 3 stretches are compositionally biased toward low complexity: residues 130–143, 153–168, and 202–253; these read QLSL…YSSQ, QQHH…QQQQ, and QQQL…ILQH. The span at 254–274 shows a compositional bias: polar residues; the sequence is SPTSGKSLSSAPHGTSVQPST. A compositionally biased stretch (basic and acidic residues) spans 313-322; it reads SGRDSVHVSD. DRBM domains lie at 344–411, 435–546, 578–645, and 690–758; these read TPMC…ETKC, TPTV…ILKN, SEIS…ELRK, and NPIS…LLGY. Disordered stretches follow at residues 758–833 and 922–950; these read YTKP…HTAS and DIHP…DFSK. Residues 765-782 show a composition bias toward polar residues; sequence PTKSSFKNPSTGEAGQTN. The span at 922-937 shows a compositional bias: basic and acidic residues; that stretch reads DIHPGGDGPQVKKDVL.

In terms of tissue distribution, strongly expressed in nervous tissue (at protein level).

It localises to the perikaryon. It is found in the cell projection. RNA-binding protein which is required for syntaxin location in sensory neurons during long-term synaptic facilitation. Binds to syntaxin mRNA and is required to maintain its accumulation at the axon hillock following neuronal stimulation and at the opposite pole in stable unstimulated sensory neurons. In Aplysia californica (California sea hare), this protein is Double-stranded RNA-binding protein Staufen homolog.